Reading from the N-terminus, the 406-residue chain is MTFSVDKVRADFPVLSREVNGLPLAYLDSAASAQKPSQVIDAEAEFYRHGYAAVHRGIHTLSAQATEKMENVRKRASLFINARSAEELVFVRGTTEGINLVANSWGNSNVRAGDNIIISQMEHHANIVPWQMLCARVGAELRVIPLNPDGTLQLETLPTLFDEKTRLLAITHVSNVLGTENPLAEMITLAHQHGAKVLVDGAQAVMHHPVDVQALDCDFYVFSGHKLYGPTGIGILYVKEALLQEMPPWEGGGSMIATVSLSEGTTWTKAPWRFEAGTPNTGGIIGLGAALEYVSALGLNNIAEYEQNLMHYALSQLAAVPDLTLYGPPDRLGVIAFNLGKHHAYDVGSFLDNYGIAVRTGHHCAMPLMAYYNVPAMCRASLAMYNTHEEVDRLVTGLQRIHRLLG.

Residue K226 is modified to N6-(pyridoxal phosphate)lysine. C364 acts as the Cysteine persulfide intermediate in catalysis.

It belongs to the class-V pyridoxal-phosphate-dependent aminotransferase family. Csd subfamily. In terms of assembly, homodimer. Interacts with SufE and the SufBCD complex composed of SufB, SufC and SufD. The interaction with SufE is required to mediate the direct transfer of the sulfur atom from the S-sulfanylcysteine. It depends on pyridoxal 5'-phosphate as a cofactor.

It localises to the cytoplasm. The catalysed reaction is (sulfur carrier)-H + L-cysteine = (sulfur carrier)-SH + L-alanine. It carries out the reaction L-selenocysteine + AH2 = hydrogenselenide + L-alanine + A + H(+). It participates in cofactor biosynthesis; iron-sulfur cluster biosynthesis. Its function is as follows. Cysteine desulfurases mobilize the sulfur from L-cysteine to yield L-alanine, an essential step in sulfur metabolism for biosynthesis of a variety of sulfur-containing biomolecules. Component of the suf operon, which is activated and required under specific conditions such as oxidative stress and iron limitation. Acts as a potent selenocysteine lyase in vitro, that mobilizes selenium from L-selenocysteine. Selenocysteine lyase activity is however unsure in vivo. This Escherichia coli O127:H6 (strain E2348/69 / EPEC) protein is Cysteine desulfurase.